The primary structure comprises 567 residues: Dihydroxy-acid dehydratase 3 (567 aa).

Cys57 contributes to the [2Fe-2S] cluster binding site. A Mg(2+)-binding site is contributed by Asp89. Cys130 contributes to the [2Fe-2S] cluster binding site. Mg(2+)-binding residues include Asp131 and Lys132. The residue at position 132 (Lys132) is an N6-carboxylysine. Position 202 (Cys202) interacts with [2Fe-2S] cluster. Glu454 contributes to the Mg(2+) binding site. Ser480 acts as the Proton acceptor in catalysis.

Belongs to the IlvD/Edd family. Homodimer. It depends on [2Fe-2S] cluster as a cofactor. Requires Mg(2+) as cofactor.

It catalyses the reaction (2R)-2,3-dihydroxy-3-methylbutanoate = 3-methyl-2-oxobutanoate + H2O. The catalysed reaction is (2R,3R)-2,3-dihydroxy-3-methylpentanoate = (S)-3-methyl-2-oxopentanoate + H2O. It functions in the pathway amino-acid biosynthesis; L-isoleucine biosynthesis; L-isoleucine from 2-oxobutanoate: step 3/4. Its pathway is amino-acid biosynthesis; L-valine biosynthesis; L-valine from pyruvate: step 3/4. In terms of biological role, functions in the biosynthesis of branched-chain amino acids. Catalyzes the dehydration of (2R,3R)-2,3-dihydroxy-3-methylpentanoate (2,3-dihydroxy-3-methylvalerate) into 2-oxo-3-methylpentanoate (2-oxo-3-methylvalerate) and of (2R)-2,3-dihydroxy-3-methylbutanoate (2,3-dihydroxyisovalerate) into 2-oxo-3-methylbutanoate (2-oxoisovalerate), the penultimate precursor to L-isoleucine and L-valine, respectively. In Aromatoleum aromaticum (strain DSM 19018 / LMG 30748 / EbN1) (Azoarcus sp. (strain EbN1)), this protein is Dihydroxy-acid dehydratase 3.